The primary structure comprises 96 residues: Invertase 7 (96 aa).

A signal peptide spans 1-19; that stretch reads MLLQAFIFLLAGFAAKISA. A glycan (N-linked (GlcNAc...) asparagine) is linked at asparagine 23. Substrate-binding positions include 39 to 42 and glutamine 60; that span reads WMND. The active site involves aspartate 42. Residues asparagine 64 and asparagine 76 are each glycosylated (N-linked (GlcNAc...) asparagine).

This sequence belongs to the glycosyl hydrolase 32 family.

The catalysed reaction is Hydrolysis of terminal non-reducing beta-D-fructofuranoside residues in beta-D-fructofuranosides.. The polypeptide is Invertase 7 (SUC7) (Saccharomyces cerevisiae (Baker's yeast)).